Here is a 484-residue protein sequence, read N- to C-terminus: Allantoinase, mitochondrial (484 aa).

H76, H78, K163, H199, H251, and D324 together coordinate Zn(2+). K163 is modified (N6-carboxylysine).

The protein belongs to the metallo-dependent hydrolases superfamily. Allantoinase family. In terms of assembly, homotetramer. Zn(2+) serves as cofactor. Post-translationally, carboxylation allows a single lysine to coordinate two zinc ions. In terms of tissue distribution, liver and kidney.

It is found in the mitochondrion. It carries out the reaction (S)-allantoin + H2O = allantoate + H(+). It functions in the pathway nitrogen metabolism; (S)-allantoin degradation; allantoate from (S)-allantoin: step 1/1. This Aquarana catesbeiana (American bullfrog) protein is Allantoinase, mitochondrial (ALN).